The primary structure comprises 132 residues: Small ribosomal subunit protein eS6 (132 aa).

It belongs to the eukaryotic ribosomal protein eS6 family.

The sequence is that of Small ribosomal subunit protein eS6 from Methanoculleus marisnigri (strain ATCC 35101 / DSM 1498 / JR1).